The primary structure comprises 115 residues: U3-lycotoxin-Ls1a (115 aa).

The N-terminal stretch at 1–20 (MKFVLLFGVLLVTFFSYSSA) is a signal peptide. Positions 21–44 (EMLDDFDQADEDELLSLIEKGEAR) are excised as a propeptide. 4 disulfides stabilise this stretch: Cys-48/Cys-63, Cys-55/Cys-72, Cys-62/Cys-87, and Cys-74/Cys-85.

This sequence belongs to the neurotoxin 19 (CSTX) family. 01 subfamily. In terms of tissue distribution, expressed by the venom gland.

Its subcellular location is the secreted. The chain is U3-lycotoxin-Ls1a from Lycosa singoriensis (Wolf spider).